A 235-amino-acid polypeptide reads, in one-letter code: Phosphoribosylaminoimidazole-succinocarboxamide synthase (235 aa).

This sequence belongs to the SAICAR synthetase family.

It carries out the reaction 5-amino-1-(5-phospho-D-ribosyl)imidazole-4-carboxylate + L-aspartate + ATP = (2S)-2-[5-amino-1-(5-phospho-beta-D-ribosyl)imidazole-4-carboxamido]succinate + ADP + phosphate + 2 H(+). It participates in purine metabolism; IMP biosynthesis via de novo pathway; 5-amino-1-(5-phospho-D-ribosyl)imidazole-4-carboxamide from 5-amino-1-(5-phospho-D-ribosyl)imidazole-4-carboxylate: step 1/2. This chain is Phosphoribosylaminoimidazole-succinocarboxamide synthase, found in Streptococcus pneumoniae (strain 70585).